Consider the following 413-residue polypeptide: Tyrosine--tRNA ligase (413 aa).

The 'HIGH' region signature appears at 57-66 (PTAPDIHLGH). A 'KMSKS' region motif is present at residues 241-245 (KMSKS). Lys244 contacts ATP. In terms of domain architecture, S4 RNA-binding spans 351-412 (VWLPRLMVQA…GKRKFARLHT (62 aa)).

It belongs to the class-I aminoacyl-tRNA synthetase family. TyrS type 2 subfamily. In terms of assembly, homodimer.

It is found in the cytoplasm. The catalysed reaction is tRNA(Tyr) + L-tyrosine + ATP = L-tyrosyl-tRNA(Tyr) + AMP + diphosphate + H(+). Functionally, catalyzes the attachment of tyrosine to tRNA(Tyr) in a two-step reaction: tyrosine is first activated by ATP to form Tyr-AMP and then transferred to the acceptor end of tRNA(Tyr). This Moorella thermoacetica (strain ATCC 39073 / JCM 9320) protein is Tyrosine--tRNA ligase.